The primary structure comprises 119 residues: MANTKRELFLKRRLRVRNKLKASANGRLRLSVHRSSKNISAQLIDDANGVTLAAASTLEKGLGFFGKNNVEASAAVGRTIAERAKAAGIEECYFDRGGFLFHGKIKALADAAREGGLKF.

The protein belongs to the universal ribosomal protein uL18 family. As to quaternary structure, part of the 50S ribosomal subunit; part of the 5S rRNA/L5/L18/L25 subcomplex. Contacts the 5S and 23S rRNAs.

Its function is as follows. This is one of the proteins that bind and probably mediate the attachment of the 5S RNA into the large ribosomal subunit, where it forms part of the central protuberance. The sequence is that of Large ribosomal subunit protein uL18 from Cereibacter sphaeroides (strain ATCC 17025 / ATH 2.4.3) (Rhodobacter sphaeroides).